The chain runs to 142 residues: Semaphorin-like protein VACWR164 (142 aa).

Residues 1–142 enclose the Sema domain; the sequence is MNTIKQSFST…MPQMKKILKM (142 aa).

It belongs to the semaphorin family.

The protein is Semaphorin-like protein VACWR164 of Bos taurus (Bovine).